Here is a 712-residue protein sequence, read N- to C-terminus: Interleukin-1 receptor-associated kinase 1 (712 aa).

The region spanning Met27–Ala106 is the Death domain. Thr66 is modified (phosphothreonine; by PKC/PRKCI). Residues Pro105–Val187 are disordered. The interval Ser110–Asn211 is proST region. Low complexity predominate over residues Ala115–Arg133. At Ser131 the chain carries Phosphoserine. A Glycyl lysine isopeptide (Lys-Gly) (interchain with G-Cter in ubiquitin) cross-link involves residue Lys134. Positions Ser137 to Ser154 are enriched in polar residues. Lys180 participates in a covalent cross-link: Glycyl lysine isopeptide (Lys-Gly) (interchain with G-Cter in ubiquitin). Thr209 carries the phosphothreonine; by IRAK4 modification. A Protein kinase domain is found at Phe212–Leu521. Residues Ile218–Val226 and Lys239 each bind ATP. Asp340 acts as the Proton acceptor in catalysis. ATP-binding positions include Lys342–Asn345 and Asp358. Phosphoserine is present on residues Ser371 and Ser375. Phosphothreonine is present on Thr387. Disordered regions lie at residues Ser532–Ser591, Ala613–Ile660, and Ser690–Ser712. Residues Gln543–Arg553 are compositionally biased toward polar residues. Position 556 is a phosphoserine (Ser556). 2 stretches are compositionally biased toward low complexity: residues Gln562–Ala575 and Glu643–Pro658.

The protein belongs to the protein kinase superfamily. TKL Ser/Thr protein kinase family. Pelle subfamily. In terms of assembly, homodimer. Forms a complex with TRAF6, PELI1, IRAK4 and MYD88. Direct binding of SMAD6 to PELI1 prevents complex formation and hence negatively regulates IL1R-TLR signaling and eventually NF-kappa-B-mediated gene expression. The TRAF6-PELI1-IRAK4-MYD88 complex recruits MAP3K7/TAK1, TAB1 and TAB2 to mediate NF-kappa-B activation. Interaction with MYD88 recruits IRAK1 to the stimulated receptor complex. Interacts with TOLLIP; this interaction occurs in the cytosol prior to receptor activation. Interacts with IL1RL1. Interacts with PELI1 and TRAF6. Interacts (when polyubiquitinated) with IKBKG/NEMO. Interacts with RSAD2/viperin. Interacts with IRAK1BP1. Interacts with PELI2. Interacts with ZC3H12A; this interaction increases the interaction between ZC3H12A and IKBKB/IKKB. Interacts with IRAK4. Interacts with PELI3. Interacts with INAVA; the interaction takes place upon PRR stimulation. Interacts (via C-terminus) with NFATC4 (via N-terminus). As to quaternary structure, (Microbial infection) Interacts with mumps virus protein SH; this interaction inhibits downstream NF-kappa-B pathway activation. (Microbial infection) Interacts with alphaviruses SINV, CHIKV, RRV, VEEV and EEEV capsid proteins; the interactions lead to inhibition of IRAK1-dependent signaling. Requires Mg(2+) as cofactor. In terms of processing, following recruitment on the activated receptor complex, phosphorylated on Thr-209, probably by IRAK4, resulting in a conformational change of the kinase domain, allowing further phosphorylations to take place. Thr-387 phosphorylation in the activation loop is required to achieve full enzymatic activity. Polyubiquitinated by TRAF6 after cell stimulation with IL-1-beta by PELI1, PELI2 and PELI3. Polyubiquitination occurs with polyubiquitin chains linked through 'Lys-63'. Ubiquitination promotes interaction with NEMO/IKBKG. Also sumoylated; leading to nuclear translocation. Isoform 1 and isoform 2 are ubiquitously expressed in all tissues examined, with isoform 1 being more strongly expressed than isoform 2.

The protein resides in the cytoplasm. It is found in the nucleus. It localises to the lipid droplet. The enzyme catalyses L-seryl-[protein] + ATP = O-phospho-L-seryl-[protein] + ADP + H(+). It carries out the reaction L-threonyl-[protein] + ATP = O-phospho-L-threonyl-[protein] + ADP + H(+). Its function is as follows. Serine/threonine-protein kinase that plays a critical role in initiating innate immune response against foreign pathogens. Involved in Toll-like receptor (TLR) and IL-1R signaling pathways. Is rapidly recruited by MYD88 to the receptor-signaling complex upon TLR activation. Association with MYD88 leads to IRAK1 phosphorylation by IRAK4 and subsequent autophosphorylation and kinase activation. Phosphorylates E3 ubiquitin ligases Pellino proteins (PELI1, PELI2 and PELI3) to promote pellino-mediated polyubiquitination of IRAK1. Then, the ubiquitin-binding domain of IKBKG/NEMO binds to polyubiquitinated IRAK1 bringing together the IRAK1-MAP3K7/TAK1-TRAF6 complex and the NEMO-IKKA-IKKB complex. In turn, MAP3K7/TAK1 activates IKKs (CHUK/IKKA and IKBKB/IKKB) leading to NF-kappa-B nuclear translocation and activation. Alternatively, phosphorylates TIRAP to promote its ubiquitination and subsequent degradation. Phosphorylates the interferon regulatory factor 7 (IRF7) to induce its activation and translocation to the nucleus, resulting in transcriptional activation of type I IFN genes, which drive the cell in an antiviral state. When sumoylated, translocates to the nucleus and phosphorylates STAT3. The polypeptide is Interleukin-1 receptor-associated kinase 1 (Homo sapiens (Human)).